The chain runs to 264 residues: Thymidylate synthase (264 aa).

Residue Arg-21 participates in dUMP binding. His-51 contributes to the (6R)-5,10-methylene-5,6,7,8-tetrahydrofolate binding site. 126–127 (RR) lines the dUMP pocket. Cys-146 serves as the catalytic Nucleophile. DUMP is bound by residues 166–169 (RSAD), Asn-177, and 207–209 (HIY). Residue Asp-169 participates in (6R)-5,10-methylene-5,6,7,8-tetrahydrofolate binding. Ala-263 is a binding site for (6R)-5,10-methylene-5,6,7,8-tetrahydrofolate.

It belongs to the thymidylate synthase family. Bacterial-type ThyA subfamily. Homodimer.

Its subcellular location is the cytoplasm. It catalyses the reaction dUMP + (6R)-5,10-methylene-5,6,7,8-tetrahydrofolate = 7,8-dihydrofolate + dTMP. It participates in pyrimidine metabolism; dTTP biosynthesis. Its function is as follows. Catalyzes the reductive methylation of 2'-deoxyuridine-5'-monophosphate (dUMP) to 2'-deoxythymidine-5'-monophosphate (dTMP) while utilizing 5,10-methylenetetrahydrofolate (mTHF) as the methyl donor and reductant in the reaction, yielding dihydrofolate (DHF) as a by-product. This enzymatic reaction provides an intracellular de novo source of dTMP, an essential precursor for DNA biosynthesis. This Rhizobium meliloti (strain 1021) (Ensifer meliloti) protein is Thymidylate synthase.